A 916-amino-acid polypeptide reads, in one-letter code: MAGLTRTAGAFAVTPHKISVCILLQIYAPSAQMSLPFPFSSVAQHNRLGLYLLSLTKSCDDIFEPKLEKLINQLREVGEEMDAWLTDHLTNRFSSLASPDDLLNFFNDMRGILGSLDSGVVQDDQIILDPNSNLGMFVRRCILAFNLLSFEGVCHLFSSIEDYCKEAHSSFAQFGAPNNNLESLIQYDQMDMENYAMDKPTEEIEFQKTASGIVPFHLHTPDSLMKATEGLLHNRKETSRTSKKDTEATPVARASTSTLEESLVDESLFLRTNLQIQGFLMEQADAIEIHGSSSSFSSSSIESFLDQLQKLAPELHRVHFLRYLNKLHSDDYFAALDNLLRYFDYSAGTEGFDLVPPSTGCSMYGRYEIGLLCLGMMHFRFGHPNLALEVLTEAVRVSQQLSNDTCLAYTLAAMSNLLSEMGIASTSGVLGSSYSPVTSTASSLSVQQRVYILLKESLRRADSLKLRRLVASNHLAMAKFELMHVQRPLLSFGPKASMRHKTCPVSVCKEIRLGAHLISDFSSESSTMTIDGSLSSAWLKDLQKPWGPPVISPDSGSRKSSTFFQLCDHLVSIPGSVSQLIGASYLLRATSWELYGSAPMARMNTLVYATLFGDSSSSSDAELAYLKLIQHLALYKGYKDAFAALKVAEEKFLTVSKSKVLLLKLQLLHERALHCGNLKLAQRICNELGGLASTAMGVDMELKVEASLREARTLLAAKQYSQAANVAHSLFCTCHKFNLQIEKASVLLLLAEIHKKSGNAVLGLPYALASISFCQSFNLDLLKASATLTLAELWLGLGSNHTKRALDLLHGAFPMILGHGGLELRARAYIFEANCYLSDPSSSVSTDSDTVLDSLRQASDELQALEYHELAAEASYLMAMVYDKLGRLDEREEAASLFKKHIIALENPQDVEQNMA.

The span at 234–247 (NRKETSRTSKKDTE) shows a compositional bias: basic and acidic residues. A disordered region spans residues 234-255 (NRKETSRTSKKDTEATPVARAS).

This sequence belongs to the APC5 family. In terms of assembly, the APC/C is composed of at least 10 subunits. Interacts with PYM.

It is found in the nucleus. Its pathway is protein modification; protein ubiquitination. In terms of biological role, component of the anaphase promoting complex/cyclosome (APC/C), a cell cycle-regulated E3 ubiquitin-protein ligase complex that controls progression through mitosis and the G1 phase of the cell cycle. The APC/C complex controls several key steps in the cell cycle by mediating ubiquitination and subsequent degradation of target proteins such as cyclins. The APC/C complex is required for the female gametophyte development and is involved in several aspect of development by controlling cell division and cell elongation. Involved in the control of endoreduplication. This Arabidopsis thaliana (Mouse-ear cress) protein is Anaphase-promoting complex subunit 5 (APC5).